We begin with the raw amino-acid sequence, 296 residues long: MNEQLLPDIAAQATHHDLPLHWVGMAGIALPIQLAGQALNASVDIGVSLDDAGARGIHMSRLYLALQGLAGKPLTLAALQHLLDDCLSSHHELSDSASLTVRGALPLQRPALVSQLSGWKHYPFEIHARQDGRGLHMELQVELDYSSTCPCSAALARQLIQQRFAESFAQQPLNYLDVLDWLGSTQGIVATPHSQRSTATLQLRLAADCIDLPLLALLEAAERALGTPVQTAVKRADEQAFALANGQNLMFCEDAARRLHRALRQLPQASAFRVRVVHAESLHAHDAVAESRWNWS.

It belongs to the GTP cyclohydrolase IV family.

It catalyses the reaction GTP + H2O = 7,8-dihydroneopterin 3'-triphosphate + formate + H(+). Its pathway is cofactor biosynthesis; 7,8-dihydroneopterin triphosphate biosynthesis; 7,8-dihydroneopterin triphosphate from GTP: step 1/1. Its function is as follows. Converts GTP to 7,8-dihydroneopterin triphosphate. The protein is GTP cyclohydrolase FolE2 of Ectopseudomonas mendocina (strain ymp) (Pseudomonas mendocina).